Reading from the N-terminus, the 992-residue chain is MMEADRPEKLFVGGLNLKTDEKALKAEFGKYGHIIKVFLIKDRKTNKSRGFAFVTFESPADAKAAARDMNGKYLDGKAIMVAQTIKPAFESSRWVPPTPGSGSRSRFSHRTRGGGSSPQRPPSQGRPDDGRGYVGYFDLWPYRAPMPRKRGPPPRHCASPPHKRRDPGDFVPALREYSRRYYGHSSVPDYCPXRGDGNRNGYRGRDHDYMDHPSKGSYREPLKSYGGPCGAAPVRGTPPSYGGGCCYEEYQGNSPDACSEGRSSEALPVVLPDAYSRDHLPKAYSGGRSSSSNSYSRSDRYGEEGCYEEYRGRSPDAHSGGRNSSSNSYGQSHHYGGEGRYEEYRGRYEEYRGRSHEARSGGRSTDAHSGGRSDNAYSGGHDSSSWSDCCGGGGRYEEYQGRSLDANSGGRSPEAYSGGHDNSSWSDRYGVGGHYEENRGHSLDANSGGRSPDTHSGGRSSSSNSYGQSHRYGGEGHYEYRGRSHDAHSGGCSADAYSGGHDSSSRSHRYRGGGRYVEYRGRSLDANSGGCWPDAYSGGHDSSSQSYRYRGGGCYEEYRGRSLDANSGGRSPNAYSGGHDSSSRSHRYGGGGCYEEYRGRSLDANSGGRWPDAYSGGHDSSSQSNRYGGGGCYEEYRGRSLDANSGGCSPNAYSGGHDSSSQSHRYGGGGRSLDANSGGRSPDAYSGGHDSSSQSNRYGGGSRYEEYRGRSLDANSSGRLPDAYSGGHDSSSWSHRYGGGGRYEEYRGRSLDANSGGRSPNAYSGGRDSSSNSYDRSHRYGGGGHYEEYRGRSHDTHSRGQSPDAHSGDRSTEAYSRGRNSFSNSYGQSDHYGRGGRYEEYQGRSPDAYGGGRGLNSSNNSHGRSHRYGGGGRYEEYRGPSPDAHSGGHDSSIKSYGLSDRYGGGGHYEEYQGSLPDAYSGDHDRSSNSYGRSDRYSRGRDRVGRPDRGLPLPMETGSPPLHDSYSRSGCRVPRGGGRQGGRFERGEGQSRY.

One can recognise an RRM domain in the interval E8 to K86. Disordered regions lie at residues S91–G130, A144–D169, P188–H207, D278–S385, E397–R511, S562–Y588, and N644–Y992. Residues Y284–S296 show a composition bias toward low complexity. Over residues R297–D316 the composition is skewed to basic and acidic residues. The span at H318–H334 shows a compositional bias: low complexity. The segment covering Y335 to G371 has biased composition (basic and acidic residues). The span at T454 to R471 shows a compositional bias: low complexity. A compositionally biased stretch (basic and acidic residues) spans Y472–H488. Polar residues-rich tracts occupy residues D564 to A574, N644 to H664, and D752 to Y774. Basic and acidic residues predominate over residues H785–S798. Over residues G818 to Q828 the composition is skewed to polar residues. 3 stretches are compositionally biased toward basic and acidic residues: residues H831–Q842, S920–R948, and G981–Y992.

The protein is RNA-binding motif protein, X-linked-like-3 (RBMXL3) of Pan troglodytes (Chimpanzee).